The following is an 888-amino-acid chain: Phosphoenolpyruvate carboxylase (888 aa).

Catalysis depends on residues histidine 144 and lysine 553.

The protein belongs to the PEPCase type 1 family. It depends on Mg(2+) as a cofactor.

It carries out the reaction oxaloacetate + phosphate = phosphoenolpyruvate + hydrogencarbonate. Its function is as follows. Forms oxaloacetate, a four-carbon dicarboxylic acid source for the tricarboxylic acid cycle. This Alcanivorax borkumensis (strain ATCC 700651 / DSM 11573 / NCIMB 13689 / SK2) protein is Phosphoenolpyruvate carboxylase.